Consider the following 120-residue polypeptide: Large ribosomal subunit protein P3y (120 aa).

The span at 81–92 (GGAAAGGGGGGE) shows a compositional bias: gly residues. The tract at residues 81 to 120 (GGAAAGGGGGGEAAAATKEEEKKKEESEEEEGDFGFDLFG) is disordered. Residues 97–106 (TKEEEKKKEE) show a composition bias toward basic and acidic residues.

Belongs to the eukaryotic ribosomal protein P1/P2 family.

Its function is as follows. Plays an important role in the elongation step of protein synthesis. The protein is Large ribosomal subunit protein P3y (RPP3B) of Arabidopsis thaliana (Mouse-ear cress).